A 315-amino-acid chain; its full sequence is Olfactory receptor 3A3 (315 aa).

The Extracellular segment spans residues 1–28; the sequence is MESEAGTNRTAVAEFMLLGLVQTEEMQS. N-linked (GlcNAc...) asparagine glycosylation occurs at Asn8. The helical transmembrane segment at 29–52 threads the bilayer; the sequence is VIFVLLLFAYLVTTGGNLSILAAI. At 53 to 60 the chain is on the cytoplasmic side; sequence LVEPKLHT. Residues 61-82 traverse the membrane as a helical segment; it reads PMYFFLGNLSVLDVGCITVTVP. At 83–103 the chain is on the extracellular side; the sequence is AMLGRLLSHKSTISYDACLSQ. Cysteines 100 and 192 form a disulfide. The helical transmembrane segment at 104–123 threads the bilayer; that stretch reads LFFFHLLAGMDCFLLTAMAY. The Cytoplasmic portion of the chain corresponds to 124-143; that stretch reads DRFLAICRPLTYSTHMNQRV. The helical transmembrane segment at 144-161 threads the bilayer; sequence QRMLVAVSWTCAFTNALT. The Extracellular portion of the chain corresponds to 162–199; the sequence is HTIALTTLNFCGPSVINHFYCDLPQLFQLSCSSTQLNE. The chain crosses the membrane as a helical span at residues 200–222; that stretch reads LLLFVAAAVMAVAPLVFISVSYA. The Cytoplasmic portion of the chain corresponds to 223–239; the sequence is HVVAAVLQIHSAEGRKK. The helical transmembrane segment at 240–262 threads the bilayer; the sequence is AFSTCGSHLTVVGIFYGTGVFSY. The Extracellular segment spans residues 263-275; it reads MRLGSVESSDKDK. The helical transmembrane segment at 276–295 threads the bilayer; sequence GVGVFMTVINPMLNPLIYSL. At 296–315 the chain is on the cytoplasmic side; the sequence is RNTDVQGALCQLLVVKRSLT.

Belongs to the G-protein coupled receptor 1 family.

The protein resides in the cell membrane. Functionally, odorant receptor. This chain is Olfactory receptor 3A3 (OR3A3), found in Pan troglodytes (Chimpanzee).